Here is a 158-residue protein sequence, read N- to C-terminus: SsrA-binding protein (158 aa).

Positions 134-158 (KLHDKRETEKERDWNRQKSRLLKTG) are disordered. A compositionally biased stretch (basic and acidic residues) spans 137-149 (DKRETEKERDWNR).

Belongs to the SmpB family.

The protein localises to the cytoplasm. In terms of biological role, required for rescue of stalled ribosomes mediated by trans-translation. Binds to transfer-messenger RNA (tmRNA), required for stable association of tmRNA with ribosomes. tmRNA and SmpB together mimic tRNA shape, replacing the anticodon stem-loop with SmpB. tmRNA is encoded by the ssrA gene; the 2 termini fold to resemble tRNA(Ala) and it encodes a 'tag peptide', a short internal open reading frame. During trans-translation Ala-aminoacylated tmRNA acts like a tRNA, entering the A-site of stalled ribosomes, displacing the stalled mRNA. The ribosome then switches to translate the ORF on the tmRNA; the nascent peptide is terminated with the 'tag peptide' encoded by the tmRNA and targeted for degradation. The ribosome is freed to recommence translation, which seems to be the essential function of trans-translation. This is SsrA-binding protein from Allorhizobium ampelinum (strain ATCC BAA-846 / DSM 112012 / S4) (Agrobacterium vitis (strain S4)).